We begin with the raw amino-acid sequence, 1415 residues long: DNA-directed RNA polymerase subunit beta' (1415 aa).

4 residues coordinate Zn(2+): Cys-72, Cys-74, Cys-87, and Cys-90. The Mg(2+) site is built by Asp-463, Asp-465, and Asp-467. Zn(2+) contacts are provided by Cys-811, Cys-885, Cys-892, and Cys-895.

Belongs to the RNA polymerase beta' chain family. In terms of assembly, the RNAP catalytic core consists of 2 alpha, 1 beta, 1 beta' and 1 omega subunit. When a sigma factor is associated with the core the holoenzyme is formed, which can initiate transcription. It depends on Mg(2+) as a cofactor. Zn(2+) serves as cofactor.

It catalyses the reaction RNA(n) + a ribonucleoside 5'-triphosphate = RNA(n+1) + diphosphate. In terms of biological role, DNA-dependent RNA polymerase catalyzes the transcription of DNA into RNA using the four ribonucleoside triphosphates as substrates. This chain is DNA-directed RNA polymerase subunit beta', found in Cereibacter sphaeroides (strain ATCC 17023 / DSM 158 / JCM 6121 / CCUG 31486 / LMG 2827 / NBRC 12203 / NCIMB 8253 / ATH 2.4.1.) (Rhodobacter sphaeroides).